We begin with the raw amino-acid sequence, 85 residues long: Large ribosomal subunit protein bL27 (85 aa).

A disordered region spans residues 1–25 (MAHKKAGGSSRNGRDSHSKRLGVKH).

This sequence belongs to the bacterial ribosomal protein bL27 family.

The chain is Large ribosomal subunit protein bL27 from Buchnera aphidicola subsp. Baizongia pistaciae (strain Bp).